The following is a 549-amino-acid chain: Chaperonin GroEL (549 aa).

ATP-binding positions include 30–33 (TLGP), K51, 87–91 (DGTTT), G415, and D495.

The protein belongs to the chaperonin (HSP60) family. Forms a cylinder of 14 subunits composed of two heptameric rings stacked back-to-back. Interacts with the co-chaperonin GroES.

It is found in the cytoplasm. It catalyses the reaction ATP + H2O + a folded polypeptide = ADP + phosphate + an unfolded polypeptide.. Functionally, together with its co-chaperonin GroES, plays an essential role in assisting protein folding. The GroEL-GroES system forms a nano-cage that allows encapsulation of the non-native substrate proteins and provides a physical environment optimized to promote and accelerate protein folding. The protein is Chaperonin GroEL of Colwellia maris.